Here is a 502-residue protein sequence, read N- to C-terminus: Maturase K (502 aa).

Belongs to the intron maturase 2 family. MatK subfamily.

The protein localises to the plastid. It localises to the chloroplast. Usually encoded in the trnK tRNA gene intron. Probably assists in splicing its own and other chloroplast group II introns. In Ipomoea purpurea (Common morning glory), this protein is Maturase K.